The chain runs to 583 residues: MQTPKPRPGSLEVPQKKSPASTPKTARKLKTSESDPVSSPNTKIRTPKTQSPKVVADRRSPRTPVNEIQKKRTGKTPELASQISQLQEELKKAKEQLSASEALKKEAQDQAEETKQQLMEINASEDSRIDELRKLSQERDKAWQSELEAMQRQHAMDSAALSSTMNEVQKLKAQLSESENVENLRMELNETLSLVEKLRGELFDAKEGEAQAHEIVSGTEKQLEIANLTLEMLRSDGMKMSEACNSLTTELEQSKSEVRSLEQLVRQLEEEDEARGNANGDSSSVEELKEEINVARQEISQLKSAVEVTERRYHEEYIQSTLQIRTAYEQVDEVKSGYAQREAELGEELKKTKAERDSLHERLMDKEAKLRILVDENEILNSKIKEKEEVYLNLENSLNQNEPEDTGELKKLESDVMELRANLMDKEMELQSVMSQYESLRSEMETMQSEKNKAIDEALAKLGSLTEEADKSGKRAENATEQLGAAQVTNTELEAELRRLKVQCDQWRKAAEAAATMLSGGNNNNNSNGKYVERTGSLESPLRRRNVNMSPYMGETDDELSSPKKKNGSMLKKIGVLLKKSQK.

Residues 1-55 (MQTPKPRPGSLEVPQKKSPASTPKTARKLKTSESDPVSSPNTKIRTPKTQSPKVV) constitute a chloroplast transit peptide. 2 disordered regions span residues 1–80 (MQTP…PELA) and 101–125 (EALK…NASE). The span at 34–52 (SDPVSSPNTKIRTPKTQSP) shows a compositional bias: polar residues. Coiled coils occupy residues 74-207 (GKTP…DAKE) and 238-516 (MKMS…AAAT). Residues 102–115 (ALKKEAQDQAEETK) show a composition bias toward basic and acidic residues. Residues 518 to 583 (LSGGNNNNNS…IGVLLKKSQK (66 aa)) form a disordered region. Positions 519-529 (SGGNNNNNSNG) are enriched in low complexity. Phosphoserine is present on Ser540.

It belongs to the ICR family. Interacts with ARAC8, ARAC11 and KIN13A in vitro, but not with ICR1 or SEC3A.

The protein resides in the plastid. It localises to the chloroplast. In terms of biological role, acts as a scaffold, mediating interaction of ROPs with different proteins. The chain is Interactor of constitutive active ROPs 2, chloroplastic (ICR2) from Arabidopsis thaliana (Mouse-ear cress).